The primary structure comprises 211 residues: Thiamine-phosphate synthase (211 aa).

4-amino-2-methyl-5-(diphosphooxymethyl)pyrimidine-binding positions include glutamine 37–lysine 41 and asparagine 69. Mg(2+) contacts are provided by aspartate 70 and aspartate 89. Serine 108 serves as a coordination point for 4-amino-2-methyl-5-(diphosphooxymethyl)pyrimidine. Threonine 134–threonine 136 is a 2-[(2R,5Z)-2-carboxy-4-methylthiazol-5(2H)-ylidene]ethyl phosphate binding site. Lysine 137 is a 4-amino-2-methyl-5-(diphosphooxymethyl)pyrimidine binding site. 2-[(2R,5Z)-2-carboxy-4-methylthiazol-5(2H)-ylidene]ethyl phosphate is bound by residues glycine 166 and valine 186 to serine 187.

This sequence belongs to the thiamine-phosphate synthase family. Mg(2+) serves as cofactor.

The enzyme catalyses 2-[(2R,5Z)-2-carboxy-4-methylthiazol-5(2H)-ylidene]ethyl phosphate + 4-amino-2-methyl-5-(diphosphooxymethyl)pyrimidine + 2 H(+) = thiamine phosphate + CO2 + diphosphate. It catalyses the reaction 2-(2-carboxy-4-methylthiazol-5-yl)ethyl phosphate + 4-amino-2-methyl-5-(diphosphooxymethyl)pyrimidine + 2 H(+) = thiamine phosphate + CO2 + diphosphate. The catalysed reaction is 4-methyl-5-(2-phosphooxyethyl)-thiazole + 4-amino-2-methyl-5-(diphosphooxymethyl)pyrimidine + H(+) = thiamine phosphate + diphosphate. It participates in cofactor biosynthesis; thiamine diphosphate biosynthesis; thiamine phosphate from 4-amino-2-methyl-5-diphosphomethylpyrimidine and 4-methyl-5-(2-phosphoethyl)-thiazole: step 1/1. Functionally, condenses 4-methyl-5-(beta-hydroxyethyl)thiazole monophosphate (THZ-P) and 2-methyl-4-amino-5-hydroxymethyl pyrimidine pyrophosphate (HMP-PP) to form thiamine monophosphate (TMP). This chain is Thiamine-phosphate synthase, found in Salmonella paratyphi B (strain ATCC BAA-1250 / SPB7).